The following is a 528-amino-acid chain: Ivanolysin (528 aa).

The first 23 residues, 1-23, serve as a signal peptide directing secretion; it reads MKKIMLLLMTLLLVSLPLAQEAQ. The next 4 beta stranded transmembrane spans lie at 213-226, 233-242, 311-320, and 328-340; these read ESQL…AFKA, VNFGAISEGK, STRVKAAFDT, and KGDT…IQNA. Residues 482-492 carry the Conserved undecapeptide motif; the sequence is ECTGLAWEWWR. A Cholesterol binding motif is present at residues 514-515; that stretch reads TL.

The protein belongs to the cholesterol-dependent cytolysin family. As to quaternary structure, homooligomeric pore complex of 35 to 50 subunits; when inserted in the host membrane.

It localises to the secreted. The protein resides in the host membrane. Functionally, a cholesterol-dependent toxin that causes cytolysis by forming pores in cholesterol containing host membranes. After binding to target membranes, the protein undergoes a major conformation change, leading to its insertion in the host membrane and formation of an oligomeric pore complex. Cholesterol is required for binding to host membranes, membrane insertion and pore formation; cholesterol binding is mediated by a Thr-Leu pair in the C-terminus. Can be reversibly inactivated by oxidation. This is Ivanolysin (ilo) from Listeria ivanovii.